The sequence spans 226 residues: Amelogenin (226 aa).

An N-terminal signal peptide occupies residues 1-16 (MGTWILFACLLGTAFA). S32 is subject to Phosphoserine. Residues 86 to 196 (QQHPPSHTTL…LPPQQALPPM (111 aa)) form a disordered region. Low complexity-rich tracts occupy residues 88-120 (HPPSHTTLPPHHHIPVGPAQQPVVPQQPLMPVP) and 137-182 (PTSQ…SPLH). A compositionally biased stretch (pro residues) spans 183–192 (PIQPLPPQQA).

Belongs to the amelogenin family.

Its subcellular location is the secreted. It localises to the extracellular space. The protein localises to the extracellular matrix. In terms of biological role, plays a role in the biomineralization of teeth. Seems to regulate the formation of crystallites during the secretory stage of tooth enamel development. Thought to play a major role in the structural organization and mineralization of developing enamel. The polypeptide is Amelogenin (AMEL) (Cavia porcellus (Guinea pig)).